Here is a 316-residue protein sequence, read N- to C-terminus: Pantothenate kinase (316 aa).

95–102 (GSVAVGKS) serves as a coordination point for ATP.

The protein belongs to the prokaryotic pantothenate kinase family.

It is found in the cytoplasm. It carries out the reaction (R)-pantothenate + ATP = (R)-4'-phosphopantothenate + ADP + H(+). The protein operates within cofactor biosynthesis; coenzyme A biosynthesis; CoA from (R)-pantothenate: step 1/5. The polypeptide is Pantothenate kinase (coaA) (Halalkalibacterium halodurans (strain ATCC BAA-125 / DSM 18197 / FERM 7344 / JCM 9153 / C-125) (Bacillus halodurans)).